The sequence spans 152 residues: Large ribosomal subunit protein uL15 (152 aa).

Positions 1 to 13 (MLTLGNLSPQEGS) are enriched in polar residues. Residues 1–62 (MLTLGNLSPQ…GGQMPLQRRL (62 aa)) are disordered. Residues 31–40 (TAGRGHKGFK) are compositionally biased toward basic residues.

This sequence belongs to the universal ribosomal protein uL15 family. As to quaternary structure, part of the 50S ribosomal subunit.

In terms of biological role, binds to the 23S rRNA. This is Large ribosomal subunit protein uL15 from Desulfotalea psychrophila (strain LSv54 / DSM 12343).